A 239-amino-acid chain; its full sequence is Uridylate kinase (239 aa).

Residue 10–13 (KFSG) participates in ATP binding. Residues 18-23 (GENGFG) form an involved in allosteric activation by GTP region. UMP is bound at residue G52. G53 and R57 together coordinate ATP. UMP is bound by residues D73 and 134-141 (TGNPYFTT). ATP contacts are provided by T161, Y167, and D170.

Belongs to the UMP kinase family. Homohexamer.

The protein resides in the cytoplasm. It catalyses the reaction UMP + ATP = UDP + ADP. It participates in pyrimidine metabolism; CTP biosynthesis via de novo pathway; UDP from UMP (UMPK route): step 1/1. Allosterically activated by GTP. Inhibited by UTP. Functionally, catalyzes the reversible phosphorylation of UMP to UDP. This Campylobacter jejuni subsp. jejuni serotype O:6 (strain 81116 / NCTC 11828) protein is Uridylate kinase.